A 602-amino-acid chain; its full sequence is MTDISVSKIRNFCIIAHIDHGKSTLADRLLQDTGTVKQRDMQDQFLDSMDLERERGITIKLQAARMKYKAKDSQEYILNLIDTPGHVDFSYEVSRSLQACEGALLVVDASQGVEAQTLANVYLALENNLEIIPVLNKVDLPGADAEKIKQEIEEIIGLDTSNAINCSAKTGEGIEDILEAVVSRIPHPQNEVKSLTKALIFDSYYDPYRGVIVYFRVIAGSINKKDKILLMASKKNYELDEIGIMAPDEKQVNELHAGEVGYLAASIKSVADARVGDTITLFNSPAKDPLPGYKTANPMVFCGLFPTDADQYPDLRESLEKLQLSDAALKYEPETSSAMGFGFRCGFLGLLHMEIVQERLEREYDLDLIVTAPSVIYKVNLNDQEDILIDNPSTIPDPQSRESIEEPYVKMEIYSPNEFNGTLMGLCQERRGVFIDMKYITTDRVTLIYEIPLAEVVTDFFDQMKSRTQGYASMEYHLIGYRKNDLVRLDVLINSERADPLTSIVHKDKAYGIGRGLVEKLKELIPKQQFKIPIQASIGSRIIASESISALRKDVLSKCYGGDISRKKKLLKKQAKGKKRMKAMGKVDVPQEAFMAVLKLNQ.

Positions 7–189 (SKIRNFCIIA…AVVSRIPHPQ (183 aa)) constitute a tr-type G domain. Residues 19–24 (DHGKST) and 136–139 (NKVD) contribute to the GTP site.

The protein belongs to the TRAFAC class translation factor GTPase superfamily. Classic translation factor GTPase family. LepA subfamily.

It localises to the cell inner membrane. The enzyme catalyses GTP + H2O = GDP + phosphate + H(+). Its function is as follows. Required for accurate and efficient protein synthesis under certain stress conditions. May act as a fidelity factor of the translation reaction, by catalyzing a one-codon backward translocation of tRNAs on improperly translocated ribosomes. Back-translocation proceeds from a post-translocation (POST) complex to a pre-translocation (PRE) complex, thus giving elongation factor G a second chance to translocate the tRNAs correctly. Binds to ribosomes in a GTP-dependent manner. This chain is Elongation factor 4, found in Prochlorococcus marinus subsp. pastoris (strain CCMP1986 / NIES-2087 / MED4).